The chain runs to 298 residues: 4-diphosphocytidyl-2-C-methyl-D-erythritol kinase (298 aa).

Lys-19 is a catalytic residue. 106-116 serves as a coordination point for ATP; the sequence is PVASGIGGGSA. The active site involves Asp-148.

The protein belongs to the GHMP kinase family. IspE subfamily.

The enzyme catalyses 4-CDP-2-C-methyl-D-erythritol + ATP = 4-CDP-2-C-methyl-D-erythritol 2-phosphate + ADP + H(+). The protein operates within isoprenoid biosynthesis; isopentenyl diphosphate biosynthesis via DXP pathway; isopentenyl diphosphate from 1-deoxy-D-xylulose 5-phosphate: step 3/6. Catalyzes the phosphorylation of the position 2 hydroxy group of 4-diphosphocytidyl-2C-methyl-D-erythritol. The chain is 4-diphosphocytidyl-2-C-methyl-D-erythritol kinase from Rhizobium leguminosarum bv. trifolii (strain WSM2304).